Consider the following 230-residue polypeptide: Ureidoacrylate amidohydrolase RutB (230 aa).

Residue D24 is the Proton acceptor of the active site. Residue K133 is part of the active site. C166 (nucleophile) is an active-site residue.

It belongs to the isochorismatase family. RutB subfamily.

It carries out the reaction (Z)-3-ureidoacrylate + H2O + H(+) = (Z)-3-aminoacrylate + NH4(+) + CO2. The enzyme catalyses (Z)-3-ureidoacrylate + H2O = (Z)-3-aminoacrylate + carbamate + H(+). It catalyses the reaction (Z)-2-methylureidoacrylate + H2O + H(+) = (Z)-2-methylaminoacrylate + NH4(+) + CO2. Hydrolyzes ureidoacrylate to form aminoacrylate and carbamate. The carbamate hydrolyzes spontaneously, thereby releasing one of the nitrogen atoms of the pyrimidine ring as ammonia and one of its carbon atoms as CO2. The protein is Ureidoacrylate amidohydrolase RutB of Escherichia coli O157:H7.